A 324-amino-acid polypeptide reads, in one-letter code: N-acetyl-gamma-glutamyl-phosphate reductase (324 aa).

Cysteine 131 is a catalytic residue.

Belongs to the NAGSA dehydrogenase family. Type 1 subfamily.

Its subcellular location is the cytoplasm. The enzyme catalyses N-acetyl-L-glutamate 5-semialdehyde + phosphate + NADP(+) = N-acetyl-L-glutamyl 5-phosphate + NADPH + H(+). It functions in the pathway amino-acid biosynthesis; L-arginine biosynthesis; N(2)-acetyl-L-ornithine from L-glutamate: step 3/4. Functionally, catalyzes the NADPH-dependent reduction of N-acetyl-5-glutamyl phosphate to yield N-acetyl-L-glutamate 5-semialdehyde. The sequence is that of N-acetyl-gamma-glutamyl-phosphate reductase from Bradyrhizobium sp. (strain ORS 278).